A 181-amino-acid polypeptide reads, in one-letter code: Type II secretion system protein H (181 aa).

Positions 1–5 (MRQRG) are cleaved as a propeptide — leader sequence. Residue phenylalanine 6 is modified to N-methylphenylalanine. The chain crosses the membrane as a helical span at residues 6–29 (FTLLEIMLVVLLAGVAATLVMMAI).

The protein belongs to the GSP H family. Type II secretion is composed of four main components: the outer membrane complex, the inner membrane complex, the cytoplasmic secretion ATPase and the periplasm-spanning pseudopilus. Interacts with core component OutG. Post-translationally, cleaved by prepilin peptidase. Methylated by prepilin peptidase at the amino group of the N-terminal phenylalanine once the leader sequence is cleaved by prepilin peptidase.

The protein resides in the cell inner membrane. In terms of biological role, component of the type II secretion system required for the energy-dependent secretion of extracellular factors such as proteases and toxins from the periplasm. Part of the pseudopilus tip complex that is critical for the recognition and binding of secretion substrates. This chain is Type II secretion system protein H (outH), found in Dickeya chrysanthemi (Pectobacterium chrysanthemi).